Here is a 415-residue protein sequence, read N- to C-terminus: Gamma-glutamyl phosphate reductase (415 aa).

The protein belongs to the gamma-glutamyl phosphate reductase family.

The protein resides in the cytoplasm. The catalysed reaction is L-glutamate 5-semialdehyde + phosphate + NADP(+) = L-glutamyl 5-phosphate + NADPH + H(+). The protein operates within amino-acid biosynthesis; L-proline biosynthesis; L-glutamate 5-semialdehyde from L-glutamate: step 2/2. Functionally, catalyzes the NADPH-dependent reduction of L-glutamate 5-phosphate into L-glutamate 5-semialdehyde and phosphate. The product spontaneously undergoes cyclization to form 1-pyrroline-5-carboxylate. This Mycolicibacterium vanbaalenii (strain DSM 7251 / JCM 13017 / BCRC 16820 / KCTC 9966 / NRRL B-24157 / PYR-1) (Mycobacterium vanbaalenii) protein is Gamma-glutamyl phosphate reductase.